A 360-amino-acid chain; its full sequence is MSGRPNSRGSSRLFRAPSEDASSGSSGSAVLPQEENPNASGLTRSWKAVMGMVFILTLLLLGFINHMKLKEKAFPQKSRQIYAVIAEYGSRLYNYQARLRMPKEQLELLKKESQTLENNFREILFLIEQIDVLKALLRDMQDGLHNYSWNADIDPAEGWNHTEVIDEEMSNLVNYILKKLREDQVQMADYALKSAGASVVEAGTSESYKNNKAKLYWHGIGFLNYEMPPDIILQPDVHPGKCWAFPGSQGHALIKLARKIIPTAVTMEHISEKVSPSGNISSAPKEFSVYGVLKQCEGEEIFLGQFVYNKTGTTVQTFALQHEVPEFLLCVKLKILSNWGHPNYTCLYRFRVHGTPKDDS.

Positions 1–10 are enriched in polar residues; the sequence is MSGRPNSRGS. The tract at residues 1-39 is disordered; sequence MSGRPNSRGSSRLFRAPSEDASSGSSGSAVLPQEENPNA. Residues 1–47 are Nuclear-facing; that stretch reads MSGRPNSRGSSRLFRAPSEDASSGSSGSAVLPQEENPNASGLTRSWK. A helical transmembrane segment spans residues 48–67; it reads AVMGMVFILTLLLLGFINHM. Residues 68–360 lie on the Perinuclear space side of the membrane; that stretch reads KLKEKAFPQK…RVHGTPKDDS (293 aa). Positions 103–142 form a coiled coil; that stretch reads KEQLELLKKESQTLENNFREILFLIEQIDVLKALLRDMQD. An SUN domain is found at 196–357; the sequence is GASVVEAGTS…YRFRVHGTPK (162 aa).

Self-associates. Interacts with SYNE1 and SPAG4/SUN4. Proposed to form a spermatogenesis-specific LINC complex with SYNE1 during sperm head formation possibly implicating a SUN domain-based heterotrimer with SPAG4/SUN4 associating with SYNE1.

It localises to the membrane. The protein localises to the nucleus envelope. The protein resides in the nucleus inner membrane. Functionally, as a probable component of the LINC (LInker of Nucleoskeleton and Cytoskeleton) complex, involved in the connection between the nuclear lamina and the cytoskeleton. The nucleocytoplasmic interactions established by the LINC complex play an important role in the transmission of mechanical forces across the nuclear envelope and in nuclear movement and positioning. May be involved in nuclear remodeling during sperm head formation in spermatogenesis. A probable SUN3:SYNE1 LINC complex may tether spermatid nuclei to posterior cytoskeletal structures such as the manchette. This is SUN domain-containing protein 3 (SUN3) from Bos taurus (Bovine).